The following is a 297-amino-acid chain: tRNA pseudouridine synthase B (297 aa).

The active-site Nucleophile is the Asp-44.

It belongs to the pseudouridine synthase TruB family. Type 1 subfamily.

It catalyses the reaction uridine(55) in tRNA = pseudouridine(55) in tRNA. Functionally, responsible for synthesis of pseudouridine from uracil-55 in the psi GC loop of transfer RNAs. This is tRNA pseudouridine synthase B from Mycobacterium sp. (strain JLS).